A 992-amino-acid polypeptide reads, in one-letter code: Probable RNA-dependent RNA polymerase 3 (992 aa).

Residues 88–113 (PRLSPGESPVQSPRTPAKKSCRASQD) form a disordered region.

This sequence belongs to the RdRP family.

It catalyses the reaction RNA(n) + a ribonucleoside 5'-triphosphate = RNA(n+1) + diphosphate. In terms of biological role, probably involved in the RNA silencing pathway and required for the generation of small interfering RNAs (siRNAs). In Arabidopsis thaliana (Mouse-ear cress), this protein is Probable RNA-dependent RNA polymerase 3 (RDR3).